An 84-amino-acid polypeptide reads, in one-letter code: Small ribosomal subunit protein uS17 (84 aa).

This sequence belongs to the universal ribosomal protein uS17 family. In terms of assembly, part of the 30S ribosomal subunit.

Functionally, one of the primary rRNA binding proteins, it binds specifically to the 5'-end of 16S ribosomal RNA. This chain is Small ribosomal subunit protein uS17, found in Shigella boydii serotype 18 (strain CDC 3083-94 / BS512).